The primary structure comprises 211 residues: Protein-L-isoaspartate O-methyltransferase (211 aa).

Serine 60 is a catalytic residue.

It belongs to the methyltransferase superfamily. L-isoaspartyl/D-aspartyl protein methyltransferase family.

Its subcellular location is the cytoplasm. The enzyme catalyses [protein]-L-isoaspartate + S-adenosyl-L-methionine = [protein]-L-isoaspartate alpha-methyl ester + S-adenosyl-L-homocysteine. Functionally, catalyzes the methyl esterification of L-isoaspartyl residues in peptides and proteins that result from spontaneous decomposition of normal L-aspartyl and L-asparaginyl residues. It plays a role in the repair and/or degradation of damaged proteins. This Pseudomonas fluorescens (strain Pf0-1) protein is Protein-L-isoaspartate O-methyltransferase.